Reading from the N-terminus, the 87-residue chain is Small ribosomal subunit protein uS17 (87 aa).

This sequence belongs to the universal ribosomal protein uS17 family. As to quaternary structure, part of the 30S ribosomal subunit.

In terms of biological role, one of the primary rRNA binding proteins, it binds specifically to the 5'-end of 16S ribosomal RNA. This Exiguobacterium sibiricum (strain DSM 17290 / CCUG 55495 / CIP 109462 / JCM 13490 / 255-15) protein is Small ribosomal subunit protein uS17.